Consider the following 166-residue polypeptide: Calmodulin-like protein 5 (166 aa).

EF-hand domains are found at residues 11 to 46 (EQVAEFRETFAFFDKDGDGCITLEELDTVVRSLGQT), 47 to 82 (PTREELAEMIRDVDVDGNGTIEFAEFLALMARKASR), 96 to 131 (AADEELREAFKVFDKDQDGLISAAELRHVMISLGEK), and 132 to 166 (LTDEEVEQMIREADLDGDGQVNFDEFVRMMMLSDQ). Residues D24, D26, D28, C30, E35, D60, D62, N64, T66, E71, D109, D111, D113, and E120 each coordinate Ca(2+). K131 is subject to N6,N6,N6-trimethyllysine. Ca(2+)-binding residues include D145, D147, D149, Q151, and E156.

It belongs to the calmodulin family.

Functionally, potential calcium sensor. This Oryza sativa subsp. japonica (Rice) protein is Calmodulin-like protein 5 (CML5).